A 130-amino-acid chain; its full sequence is MKLKGRKIVGGKAEGELIVSQKPLSFLGGVDPNTGIVTDAESDIRGQSIAGKVLAFPRGKGSTVGSYVIYALKKNGKAPKAIIVGEAETIVATGAIIAGIPMVDGIDVSKLKSGQRVRVKADEGLVEVEE.

Ser62 (proton acceptor) is an active-site residue.

Belongs to the AcnX type II small subunit family. Heterodimer composed of a large subunit (PMDh-L) and a small subunit (PMDh-S).

It catalyses the reaction (R)-5-phosphomevalonate = (2E)-3-methyl-5-phosphooxypent-2-enoate + H2O. Its pathway is isoprenoid biosynthesis; isopentenyl diphosphate biosynthesis via mevalonate pathway. In terms of biological role, component of a hydro-lyase that catalyzes the dehydration of mevalonate 5-phosphate (MVA5P) to form trans-anhydromevalonate 5-phosphate (tAHMP). Involved in the archaeal mevalonate (MVA) pathway, which provides fundamental precursors for isoprenoid biosynthesis, such as isopentenyl diphosphate (IPP) and dimethylallyl diphosphate (DMAPP). The sequence is that of Phosphomevalonate dehydratase small subunit from Thermococcus onnurineus (strain NA1).